Reading from the N-terminus, the 369-residue chain is Anthranilate phosphoribosyltransferase (369 aa).

5-phospho-alpha-D-ribose 1-diphosphate is bound by residues Gly-85, 88 to 89 (GD), Thr-93, 95 to 98 (NLST), 113 to 121 (KHGNRAASS), and Ser-125. Gly-85 contributes to the anthranilate binding site. Ser-97 provides a ligand contact to Mg(2+). Position 116 (Asn-116) interacts with anthranilate. An anthranilate-binding site is contributed by Arg-171. Residues Asp-229 and Glu-230 each coordinate Mg(2+).

The protein belongs to the anthranilate phosphoribosyltransferase family. As to quaternary structure, homodimer. The cofactor is Mg(2+).

The enzyme catalyses N-(5-phospho-beta-D-ribosyl)anthranilate + diphosphate = 5-phospho-alpha-D-ribose 1-diphosphate + anthranilate. It functions in the pathway amino-acid biosynthesis; L-tryptophan biosynthesis; L-tryptophan from chorismate: step 2/5. Functionally, catalyzes the transfer of the phosphoribosyl group of 5-phosphorylribose-1-pyrophosphate (PRPP) to anthranilate to yield N-(5'-phosphoribosyl)-anthranilate (PRA). In Frankia alni (strain DSM 45986 / CECT 9034 / ACN14a), this protein is Anthranilate phosphoribosyltransferase.